Here is a 180-residue protein sequence, read N- to C-terminus: Chorion protein S19 (180 aa).

The signal sequence occupies residues 1-21 (MNTFATLAVLFCACLIGNCHG).

Belongs to the chorion protein S19 family.

The protein localises to the secreted. Functionally, chorion membrane (egg shell) protein; plays a role in protecting the egg from the environment. In Drosophila subobscura (Fruit fly), this protein is Chorion protein S19 (Cp19).